The sequence spans 194 residues: MTAIQLIVGLGNPGPEYEQTRHNAGALFVERIASAQRVSLTADKKYFGLTAKFSHQGNDVRLLIPTTYMNRSGQSVAALANFFRIKPEAILVAHDELDLPPGVAKLKRGGGHGGHNGLRDIIAQLGNQNDFHRLRLGIGHPGDAKLVSNFVLGRAPRAEQEKLDASIDFALGVLPDVLAGDFAKAMRELHSQKA.

Tyr17 is a binding site for tRNA. His22 (proton acceptor) is an active-site residue. TRNA is bound by residues Tyr68, Asn70, and Asn116.

Belongs to the PTH family. Monomer.

It localises to the cytoplasm. It carries out the reaction an N-acyl-L-alpha-aminoacyl-tRNA + H2O = an N-acyl-L-amino acid + a tRNA + H(+). Its function is as follows. Hydrolyzes ribosome-free peptidyl-tRNAs (with 1 or more amino acids incorporated), which drop off the ribosome during protein synthesis, or as a result of ribosome stalling. Catalyzes the release of premature peptidyl moieties from peptidyl-tRNA molecules trapped in stalled 50S ribosomal subunits, and thus maintains levels of free tRNAs and 50S ribosomes. This Pseudomonas putida (strain GB-1) protein is Peptidyl-tRNA hydrolase.